The following is a 382-amino-acid chain: MRRVILTTGGTGGHIFPALAVAEEITRRYPKARILFLGGQYGPEADLAARAGLEYVGLPVRGVMGRGLRALAAAGAMGLGVWRAVSVVRRFDPDIAVGFGGYAAFAGVLAARLCGRPAAIHEQNAIPGLTNRLLGHVVQRVFLSLPDTTGVFPARRCVPTGNPVRTAIVAAGAAGAAGAAEKGGVSRSAHSRRLLVMGGSLGARAINEAVVAALPALRDAGVELWHQTGVADWERVRAGYKQAGISEARVEAFIDDVASAYTWADLVLCRAGATSVAELAVAGKPSVLVPFPFATHNHQLHNARHVADAGAALVVEQKDVSPGADGRPAVALDRVLVELLADRERLADMGRAARAMGRPQAAAAVVDGMEAILAGRGARGVR.

UDP-N-acetyl-alpha-D-glucosamine contacts are provided by residues 11–13 (TGG), asparagine 124, arginine 165, serine 200, isoleucine 254, and glutamine 299.

It belongs to the glycosyltransferase 28 family. MurG subfamily.

The protein resides in the cell inner membrane. It catalyses the reaction di-trans,octa-cis-undecaprenyl diphospho-N-acetyl-alpha-D-muramoyl-L-alanyl-D-glutamyl-meso-2,6-diaminopimeloyl-D-alanyl-D-alanine + UDP-N-acetyl-alpha-D-glucosamine = di-trans,octa-cis-undecaprenyl diphospho-[N-acetyl-alpha-D-glucosaminyl-(1-&gt;4)]-N-acetyl-alpha-D-muramoyl-L-alanyl-D-glutamyl-meso-2,6-diaminopimeloyl-D-alanyl-D-alanine + UDP + H(+). It functions in the pathway cell wall biogenesis; peptidoglycan biosynthesis. Functionally, cell wall formation. Catalyzes the transfer of a GlcNAc subunit on undecaprenyl-pyrophosphoryl-MurNAc-pentapeptide (lipid intermediate I) to form undecaprenyl-pyrophosphoryl-MurNAc-(pentapeptide)GlcNAc (lipid intermediate II). In Nitratidesulfovibrio vulgaris (strain DSM 19637 / Miyazaki F) (Desulfovibrio vulgaris), this protein is UDP-N-acetylglucosamine--N-acetylmuramyl-(pentapeptide) pyrophosphoryl-undecaprenol N-acetylglucosamine transferase.